Consider the following 210-residue polypeptide: 23 kDa jasmonate-induced protein (210 aa).

This sequence belongs to the jasmonate-induced protein family.

The polypeptide is 23 kDa jasmonate-induced protein (Hordeum vulgare (Barley)).